The chain runs to 574 residues: Cholinesterase (574 aa).

N57 is a glycosylation site (N-linked (GlcNAc...) asparagine). C65 and C92 are oxidised to a cystine. Residue N106 is glycosylated (N-linked (GlcNAc...) asparagine). 116 to 117 (GG) contributes to the substrate binding site. The active-site Acyl-ester intermediate is the S198. S198 carries the post-translational modification Phosphoserine. 2 N-linked (GlcNAc...) asparagine glycosylation sites follow: N241 and N256. C252 and C263 form a disulfide bridge. The Charge relay system role is filled by E325. N-linked (GlcNAc...) asparagine glycosylation is present at N341. Residues C400 and C519 are joined by a disulfide bond. Catalysis depends on H438, which acts as the Charge relay system. N-linked (GlcNAc...) asparagine glycans are attached at residues N455, N481, and N486.

The protein belongs to the type-B carboxylesterase/lipase family. In terms of assembly, homotetramer; disulfide-linked. Dimer of dimers. In terms of tissue distribution, detected in blood plasma (at protein level). Present in most cells except erythrocytes.

It is found in the secreted. It catalyses the reaction an acylcholine + H2O = a carboxylate + choline + H(+). Functionally, esterase with broad substrate specificity. Contributes to the inactivation of the neurotransmitter acetylcholine. Can degrade neurotoxic organophosphate esters. In Equus caballus (Horse), this protein is Cholinesterase (BCHE).